We begin with the raw amino-acid sequence, 416 residues long: Multifunctional CCA protein (416 aa).

Residues Gly-8 and Arg-11 each coordinate ATP. CTP is bound by residues Gly-8 and Arg-11. Mg(2+)-binding residues include Asp-21 and Asp-23. 3 residues coordinate ATP: Arg-91, Arg-138, and Arg-141. The CTP site is built by Arg-91, Arg-138, and Arg-141. An HD domain is found at 229-331; that stretch reads TGLHQELVSD…YELLQRCDAF (103 aa).

This sequence belongs to the tRNA nucleotidyltransferase/poly(A) polymerase family. Bacterial CCA-adding enzyme type 1 subfamily. Monomer. Can also form homodimers and oligomers. Requires Mg(2+) as cofactor. The cofactor is Ni(2+).

The catalysed reaction is a tRNA precursor + 2 CTP + ATP = a tRNA with a 3' CCA end + 3 diphosphate. The enzyme catalyses a tRNA with a 3' CCA end + 2 CTP + ATP = a tRNA with a 3' CCACCA end + 3 diphosphate. In terms of biological role, catalyzes the addition and repair of the essential 3'-terminal CCA sequence in tRNAs without using a nucleic acid template. Adds these three nucleotides in the order of C, C, and A to the tRNA nucleotide-73, using CTP and ATP as substrates and producing inorganic pyrophosphate. tRNA 3'-terminal CCA addition is required both for tRNA processing and repair. Also involved in tRNA surveillance by mediating tandem CCA addition to generate a CCACCA at the 3' terminus of unstable tRNAs. While stable tRNAs receive only 3'-terminal CCA, unstable tRNAs are marked with CCACCA and rapidly degraded. The protein is Multifunctional CCA protein of Xylella fastidiosa (strain 9a5c).